Consider the following 137-residue polypeptide: Protein ApaG (137 aa).

In terms of domain architecture, ApaG spans 2-126 (PKYQFQVQVQ…FVLEAFSPGQ (125 aa)).

The protein is Protein ApaG of Acidovorax sp. (strain JS42).